The primary structure comprises 336 residues: Phenylalanine--tRNA ligase alpha subunit (336 aa).

E251 contacts Mg(2+).

It belongs to the class-II aminoacyl-tRNA synthetase family. Phe-tRNA synthetase alpha subunit type 1 subfamily. In terms of assembly, tetramer of two alpha and two beta subunits. Mg(2+) is required as a cofactor.

It localises to the cytoplasm. The catalysed reaction is tRNA(Phe) + L-phenylalanine + ATP = L-phenylalanyl-tRNA(Phe) + AMP + diphosphate + H(+). The chain is Phenylalanine--tRNA ligase alpha subunit from Syntrophobacter fumaroxidans (strain DSM 10017 / MPOB).